The primary structure comprises 883 residues: Valine--tRNA ligase (883 aa).

Residues 50–60 carry the 'HIGH' region motif; it reads PNVTGKLHMGH. The short motif at 527 to 531 is the 'KMSKS' region element; sequence KMSKS. Lys-530 serves as a coordination point for ATP. Positions 811-883 form a coiled coil; sequence LNELIDLDEE…KQRLEQLQRA (73 aa). The segment at 859 to 883 is disordered; that stretch reads QRTKRSDFEDQLTSTKQRLEQLQRA.

It belongs to the class-I aminoacyl-tRNA synthetase family. ValS type 1 subfamily. As to quaternary structure, monomer.

It localises to the cytoplasm. The catalysed reaction is tRNA(Val) + L-valine + ATP = L-valyl-tRNA(Val) + AMP + diphosphate. Its function is as follows. Catalyzes the attachment of valine to tRNA(Val). As ValRS can inadvertently accommodate and process structurally similar amino acids such as threonine, to avoid such errors, it has a 'posttransfer' editing activity that hydrolyzes mischarged Thr-tRNA(Val) in a tRNA-dependent manner. In Lacticaseibacillus casei (Lactobacillus casei), this protein is Valine--tRNA ligase.